Reading from the N-terminus, the 267-residue chain is uncharacterized protein (267 aa).

Residues S210 and S224 each carry the phosphoserine modification.

As to expression, testis. Down-regulated in men with spermatocyte arrest.

Essential for normal spermatogenesis and male fertility. This is an uncharacterized protein from Homo sapiens (Human).